A 387-amino-acid polypeptide reads, in one-letter code: Type 2 DNA topoisomerase 6 subunit A (387 aa).

The Topo IIA-type catalytic domain maps to 12–160; it reads EARKKAADTL…MLILSKEKGK (149 aa). Tyr-106 serves as the catalytic O-(5'-phospho-DNA)-tyrosine intermediate. Mg(2+) contacts are provided by Glu-207 and Asp-259.

It belongs to the TOP6A family. As to quaternary structure, homodimer. Heterotetramer of two Top6A and two Top6B chains. The cofactor is Mg(2+).

The catalysed reaction is ATP-dependent breakage, passage and rejoining of double-stranded DNA.. Relaxes both positive and negative superturns and exhibits a strong decatenase activity. The protein is Type 2 DNA topoisomerase 6 subunit A of Sulfurisphaera tokodaii (strain DSM 16993 / JCM 10545 / NBRC 100140 / 7) (Sulfolobus tokodaii).